A 335-amino-acid polypeptide reads, in one-letter code: S-adenosylmethionine:tRNA ribosyltransferase-isomerase (335 aa).

Belongs to the QueA family. In terms of assembly, monomer.

It is found in the cytoplasm. The catalysed reaction is 7-aminomethyl-7-carbaguanosine(34) in tRNA + S-adenosyl-L-methionine = epoxyqueuosine(34) in tRNA + adenine + L-methionine + 2 H(+). The protein operates within tRNA modification; tRNA-queuosine biosynthesis. In terms of biological role, transfers and isomerizes the ribose moiety from AdoMet to the 7-aminomethyl group of 7-deazaguanine (preQ1-tRNA) to give epoxyqueuosine (oQ-tRNA). This chain is S-adenosylmethionine:tRNA ribosyltransferase-isomerase, found in Thermotoga petrophila (strain ATCC BAA-488 / DSM 13995 / JCM 10881 / RKU-1).